Here is a 1432-residue protein sequence, read N- to C-terminus: DNA-directed RNA polymerase subunit beta (1432 aa).

It belongs to the RNA polymerase beta chain family. As to quaternary structure, the RNAP catalytic core consists of 2 alpha, 1 beta, 1 beta' and 1 omega subunit. When a sigma factor is associated with the core the holoenzyme is formed, which can initiate transcription.

The enzyme catalyses RNA(n) + a ribonucleoside 5'-triphosphate = RNA(n+1) + diphosphate. Its function is as follows. DNA-dependent RNA polymerase catalyzes the transcription of DNA into RNA using the four ribonucleoside triphosphates as substrates. The polypeptide is DNA-directed RNA polymerase subunit beta (Solibacter usitatus (strain Ellin6076)).